A 99-amino-acid polypeptide reads, in one-letter code: Aspartyl/glutamyl-tRNA(Asn/Gln) amidotransferase subunit C (99 aa).

Belongs to the GatC family. As to quaternary structure, heterotrimer of A, B and C subunits.

It carries out the reaction L-glutamyl-tRNA(Gln) + L-glutamine + ATP + H2O = L-glutaminyl-tRNA(Gln) + L-glutamate + ADP + phosphate + H(+). The catalysed reaction is L-aspartyl-tRNA(Asn) + L-glutamine + ATP + H2O = L-asparaginyl-tRNA(Asn) + L-glutamate + ADP + phosphate + 2 H(+). Functionally, allows the formation of correctly charged Asn-tRNA(Asn) or Gln-tRNA(Gln) through the transamidation of misacylated Asp-tRNA(Asn) or Glu-tRNA(Gln) in organisms which lack either or both of asparaginyl-tRNA or glutaminyl-tRNA synthetases. The reaction takes place in the presence of glutamine and ATP through an activated phospho-Asp-tRNA(Asn) or phospho-Glu-tRNA(Gln). The chain is Aspartyl/glutamyl-tRNA(Asn/Gln) amidotransferase subunit C from Burkholderia cenocepacia (strain ATCC BAA-245 / DSM 16553 / LMG 16656 / NCTC 13227 / J2315 / CF5610) (Burkholderia cepacia (strain J2315)).